The primary structure comprises 201 residues: 3-isopropylmalate dehydratase small subunit (201 aa).

Belongs to the LeuD family. LeuD type 1 subfamily. Heterodimer of LeuC and LeuD.

It carries out the reaction (2R,3S)-3-isopropylmalate = (2S)-2-isopropylmalate. Its pathway is amino-acid biosynthesis; L-leucine biosynthesis; L-leucine from 3-methyl-2-oxobutanoate: step 2/4. Functionally, catalyzes the isomerization between 2-isopropylmalate and 3-isopropylmalate, via the formation of 2-isopropylmaleate. The chain is 3-isopropylmalate dehydratase small subunit from Ruegeria sp. (strain TM1040) (Silicibacter sp.).